The sequence spans 544 residues: Chaperonin GroEL 1 (544 aa).

ATP is bound by residues 29-32 (TLGP), Lys50, 86-90 (DGTTT), Gly414, and Asp494.

It belongs to the chaperonin (HSP60) family. Forms a cylinder of 14 subunits composed of two heptameric rings stacked back-to-back. Interacts with the co-chaperonin GroES.

It localises to the cytoplasm. The enzyme catalyses ATP + H2O + a folded polypeptide = ADP + phosphate + an unfolded polypeptide.. In terms of biological role, together with its co-chaperonin GroES, plays an essential role in assisting protein folding. The GroEL-GroES system forms a nano-cage that allows encapsulation of the non-native substrate proteins and provides a physical environment optimized to promote and accelerate protein folding. This is Chaperonin GroEL 1 from Psychromonas ingrahamii (strain DSM 17664 / CCUG 51855 / 37).